The primary structure comprises 35 residues: Phospholipase A2 bitanarin (35 aa).

The protein belongs to the phospholipase A2 family. Group II subfamily. Monomer. It depends on Ca(2+) as a cofactor. Contains 14 disulfide bonds. As to expression, expressed by the venom gland.

Its subcellular location is the secreted. It catalyses the reaction a 1,2-diacyl-sn-glycero-3-phosphocholine + H2O = a 1-acyl-sn-glycero-3-phosphocholine + a fatty acid + H(+). Snake venom phospholipase A2 (PLA2) that is the first competitive blocker of nicotinic acetylcholine receptors (nAChRs). Competes with alpha-bungarotoxin for binding to nAChRs and acetylcholine binding proteins (AChBPs) and blocks acetylcholine-elicited current. PLA2 catalyzes the calcium-dependent hydrolysis of the 2-acyl groups in 3-sn-phosphoglycerides. In Bitis arietans (African puff adder), this protein is Phospholipase A2 bitanarin.